We begin with the raw amino-acid sequence, 770 residues long: Kinesin-like protein klpA (770 aa).

The disordered stretch occupies residues 1–152; sequence MENVQSRMQG…GLGKRGEWDQ (152 aa). Residues 85-105 show a composition bias toward low complexity; it reads SSTLTRSASAASRPRGPLSSS. Over residues 106–119 the composition is skewed to polar residues; that stretch reads TSGRPKTSMSTSRR. Residues 134–152 show a composition bias toward basic and acidic residues; the sequence is THQEERSYGGLGKRGEWDQ. The stretch at 175–425 forms a coiled coil; the sequence is QESSGLKDAL…QELKGNIRVF (251 aa). Residues 421 to 756 form the Kinesin motor domain; sequence NIRVFCRVRP…LKFATKVHNT (336 aa). 514–521 is an ATP binding site; the sequence is GQTGSGKT.

Belongs to the TRAFAC class myosin-kinesin ATPase superfamily. Kinesin family. NCD subfamily.

It is found in the cytoplasm. It localises to the cytoskeleton. The chain is Kinesin-like protein klpA (klpA) from Emericella nidulans (strain FGSC A4 / ATCC 38163 / CBS 112.46 / NRRL 194 / M139) (Aspergillus nidulans).